The primary structure comprises 701 residues: Ubiquitin thioesterase zranb1-A (701 aa).

3 consecutive RanBP2-type zinc fingers follow at residues 3-33 (EHGIKWGCEYCTYENWPSAIKCTMCRAPRPS), 79-108 (PSSKWSCQICTYLNWPRAIRCTQCLSQRRT), and 143-173 (IKGQHWTCSACTYENCAKAKKCVVCDHPTPN). Cysteine 10, cysteine 13, cysteine 24, cysteine 27, cysteine 85, cysteine 88, cysteine 99, and cysteine 102 together coordinate Zn(2+). The span at 108-121 (TRSPTESPQSSGSG) shows a compositional bias: polar residues. The disordered stretch occupies residues 108 to 129 (TRSPTESPQSSGSGLRSIPSPI). Positions 150, 153, 164, and 167 each coordinate Zn(2+). Residues 198-219 (WRGGCSSSNSQRRSPPTSKRDS) form a disordered region. Positions 202–214 (CSSSNSQRRSPPT) are enriched in polar residues. 2 ANK repeats span residues 253–283 (RKTDWLFLNACVGIVEGDLSAVESYKTSGGD) and 306–333 (YTLVHLSIRFQRQDMLAILLTEVSQHAA). The 161-residue stretch at 425–585 (LYALWNRTAG…RGHFSALVAM (161 aa)) folds into the OTU domain. The active-site Nucleophile is cysteine 436. Catalysis depends on histidine 578, which acts as the Proton acceptor.

It belongs to the peptidase C64 family.

Its subcellular location is the cytoplasm. It is found in the nucleus. It catalyses the reaction Thiol-dependent hydrolysis of ester, thioester, amide, peptide and isopeptide bonds formed by the C-terminal Gly of ubiquitin (a 76-residue protein attached to proteins as an intracellular targeting signal).. Ubiquitin thioesterase, which specifically hydrolyzes 'Lys-29'-linked and 'Lys-33'-linked diubiquitin. Also cleaves 'Lys-63'-linked chains, but with 40-fold less efficiency compared to 'Lys-29'-linked ones. Positive regulator of the Wnt signaling pathway that deubiquitinates apc protein, a negative regulator of Wnt-mediated transcription. Acts as a regulator of autophagy by mediating deubiquitination of pik3c3/vps34, thereby promoting autophagosome maturation. Plays a role in the regulation of cell morphology and cytoskeletal organization. Required in the stress fiber dynamics and cell migration. This chain is Ubiquitin thioesterase zranb1-A (zranb1-a), found in Xenopus laevis (African clawed frog).